The primary structure comprises 657 residues: uncharacterized protein (657 aa).

Position 114 is a phosphoserine (S114). Disordered regions lie at residues 142–216 (LASQ…SDEE), 228–248 (SSREKNTNQGFSSANVSEEEE), 291–312 (STRSRADYPQSHVSSDTASHTP), 335–354 (SSPGRSEAETVDEPVSEGAD), and 399–522 (AEAS…SGRH). The span at 143 to 169 (ASQNTDKTSQNQARELPVTENNAQNAK) shows a compositional bias: polar residues. The span at 190–206 (AGKERTLQTPKQKEPAR) shows a compositional bias: basic and acidic residues. S213 carries the post-translational modification Phosphoserine. Polar residues-rich tracts occupy residues 234–243 (TNQGFSSANV) and 301–312 (SHVSSDTASHTP). Residues 343 to 354 (ETVDEPVSEGAD) show a composition bias toward acidic residues. Residues 437-451 (SASSASAIQQDSTSS) show a composition bias toward low complexity. Polar residues predominate over residues 462 to 484 (NTVSSAYSEDFENSPSLTASEPT). The span at 485 to 495 (AHSKESLDRTL) shows a compositional bias: basic and acidic residues. The segment covering 499 to 513 (SESSSSVKTDLPQTA) has biased composition (polar residues).

This is an uncharacterized protein from Homo sapiens (Human).